The sequence spans 361 residues: MTTTDRAGLGRQLQMIRGLHWGYGSNGDPYPMLLCGHDDDPQRRYRSMRESGVRRSRTETWVVADHATARQVLDDPAFTRATGRTPEWMRAAGAPPAEWAQPFRDVHAASWEGEVPDVGELAESFAGLLPGAGARLDLVGDFAWQVPVQGMTAVLGAAGVLRGAAWDARVSLDAQLSPQQLAVTEAAVAALPADPALRALFAGAEMTANTVVDAVLAVSAEPGLAERIADDPAAAQRTVAEVLRLHPALHLERRTATAEVRLGEHVIGEGEEVVVVVAAANRDPEVFAEPDRLDVDRPDADRALSAHRGHPGRLEELVTALATAALRAAAKALPGLTPSGPVVRRRRSPVLRGTNRCPVEL.

This sequence belongs to the cytochrome P450 family. As to quaternary structure, heterotetramer composed of EryCII and EryCIII.

It functions in the pathway antibiotic biosynthesis; erythromycin biosynthesis. Functionally, involved in the erythromycin biosynthesis pathway. Acts by forming a complex and stabilizing the desosaminyl transferase EryCIII. The protein is Cytochrome P450 family protein EryCII (eryCII) of Saccharopolyspora erythraea (strain ATCC 11635 / DSM 40517 / JCM 4748 / NBRC 13426 / NCIMB 8594 / NRRL 2338).